The following is a 284-amino-acid chain: uncharacterized protein (284 aa).

The next 3 membrane-spanning stretches (helical) occupy residues leucine 174–isoleucine 194, methionine 217–alanine 237, and leucine 241–cysteine 261.

It localises to the membrane. This is an uncharacterized protein from Saccharomyces cerevisiae (strain ATCC 204508 / S288c) (Baker's yeast).